A 164-amino-acid chain; its full sequence is Diphosphoinositol polyphosphate phosphohydrolase 3-alpha (164 aa).

Substrate contacts are provided by residues R9, 17-19 (KKR), and 38-40 (SSR). A Nudix hydrolase domain is found at 17 to 144 (KKRAACLCFR…VHAEYLEKLK (128 aa)). Mg(2+) contacts are provided by G49 and E65. The short motif at 50 to 71 (GGMEPEEEPDGAAVREVYEEAG) is the Nudix box element. The active-site Proton acceptor is the E68. Mg(2+) is bound at residue E69. Substrate is bound by residues 89–91 (RKH), R115, and K133. The tract at residues 144 to 164 (KLGGSPTNGNSAAPSPPESEP) is disordered.

Belongs to the Nudix hydrolase family. DIPP subfamily. Mg(2+) is required as a cofactor. Mn(2+) serves as cofactor. In terms of tissue distribution, mainly expressed in testis, liver kidney and, at lower level, in heart, brain, spleen, lung and skeletal muscle.

It is found in the cytoplasm. The catalysed reaction is diphospho-myo-inositol polyphosphate + H2O = myo-inositol polyphosphate + phosphate.. It catalyses the reaction P(1),P(6)-bis(5'-adenosyl) hexaphosphate + H2O = adenosine 5'-pentaphosphate + AMP + 2 H(+). It carries out the reaction P(1),P(5)-bis(5'-adenosyl) pentaphosphate + H2O = adenosine 5'-tetraphosphate + AMP + 2 H(+). Its function is as follows. Cleaves a beta-phosphate from the diphosphate groups in PP-InsP5 (diphosphoinositol pentakisphosphate), suggesting that it may play a role in signal transduction. Also able to catalyze the hydrolysis of dinucleoside oligophosphates, with Ap6A and Ap5A being the preferred substrates. The major reaction products are ADP and p4a from Ap6A and ADP and ATP from Ap5A. Also able to hydrolyze 5-phosphoribose 1-diphosphate; however, the relevance of such activity in vivo remains unclear. This Mus musculus (Mouse) protein is Diphosphoinositol polyphosphate phosphohydrolase 3-alpha.